A 387-amino-acid chain; its full sequence is Odorant receptor 94a (387 aa).

At 1–45 the chain is on the cytoplasmic side; the sequence is MDKHKDRIESMRLILQVMQLFGLWPWSLKSEEEWTFTGFVKRNYR. A helical transmembrane segment spans residues 46–66; it reads FLLHLPITFTFIGLMWLEAFI. Residues 67–75 are Extracellular-facing; that stretch reads SSNLEQAGQ. The helical transmembrane segment at 76 to 96 threads the bilayer; that stretch reads VLYMSITEMALVVKILSIWHY. The Cytoplasmic segment spans residues 97–133; the sequence is RTEAWRLMYELQHAPDYQLHNQEEVDFWRREQRFFKW. A helical membrane pass occupies residues 134–154; it reads FFYIYILISLGVVYSGCTGVL. At 155–191 the chain is on the extracellular side; it reads FLEGYELPFAYYVPFEWQNERRYWFAYGYDMAGMTLT. A helical transmembrane segment spans residues 192-212; that stretch reads CISNITLDTLGCYFLFHISLL. The Cytoplasmic segment spans residues 213–255; that stretch reads YRLLGLRLRETKNMKNDTIFGQQLRAIFIMHQRIRSLTLTCQR. A helical transmembrane segment spans residues 256–276; that stretch reads IVSPYILSQIILSALIICFSG. Over 277–290 the chain is Extracellular; that stretch reads YRLQHVGIRDNPGQ. Residues 291-311 form a helical membrane-spanning segment; that stretch reads FISMLQFVSVMILQIYLPCYY. Residues 312–362 are Cytoplasmic-facing; sequence GNEITVYANQLTNEVYHTNWLECRPPIRKLLNAYMEHLKKPVTIRAGNFFA. A helical transmembrane segment spans residues 363–383; that stretch reads VGLPIFVKTINNAYSFLALLL. The N-linked (GlcNAc...) asparagine glycan is linked to asparagine 384. Over 384–387 the chain is Extracellular; that stretch reads NVSN.

The protein belongs to the insect chemoreceptor superfamily. Heteromeric odorant receptor channel (TC 1.A.69) family. Or2a subfamily. As to quaternary structure, interacts with Orco. Complexes exist early in the endomembrane system in olfactory sensory neurons (OSNs), coupling these complexes to the conserved ciliary trafficking pathway.

Its subcellular location is the cell membrane. In terms of biological role, odorant receptor which mediates acceptance or avoidance behavior, depending on its substrates. The odorant receptor repertoire encodes a large collection of odor stimuli that vary widely in identity, intensity, and duration. May form a complex with Orco to form odorant-sensing units, providing sensitive and prolonged odorant signaling and calcium permeability. The sequence is that of Odorant receptor 94a (Or94a) from Drosophila melanogaster (Fruit fly).